The primary structure comprises 339 residues: Homocysteine S-methyltransferase 2 (339 aa).

Positions 12 to 326 constitute a Hcy-binding domain; the sequence is AVRRWVDAAG…NTIRAIHRTL (315 aa). Zn(2+) contacts are provided by cysteine 244, cysteine 311, and cysteine 312.

Monomer. Zn(2+) is required as a cofactor.

It catalyses the reaction S-methyl-L-methionine + L-homocysteine = 2 L-methionine + H(+). Catalyzes methyl transfer from S-methylmethionine (SMM) to adenosyl-L-homocysteine (AdoMet). SMM degradation (by HMT-1, HMT-2, HMT-3 and HMT-4) and biosynthesis (by MMT1) constitute the SMM cycle in plants, which is probably required to achieve short term control of AdoMet level. This chain is Homocysteine S-methyltransferase 2 (HMT-2), found in Zea mays (Maize).